Consider the following 164-residue polypeptide: Cytochrome c-type biogenesis protein CcmE (164 aa).

Topologically, residues 1–8 (MNPRRKSR) are cytoplasmic. The chain crosses the membrane as a helical; Signal-anchor for type II membrane protein span at residues 9–29 (LYLAMVVLIGISLTTTLVLYA). Over 30–164 (LRSNIDLFYT…RGTNTTGNAL (135 aa)) the chain is Periplasmic. Residues histidine 130 and tyrosine 134 each contribute to the heme site. The segment at 140 to 164 (EEAMKENHSRPAAAYRGTNTTGNAL) is disordered.

This sequence belongs to the CcmE/CycJ family.

It localises to the cell inner membrane. Heme chaperone required for the biogenesis of c-type cytochromes. Transiently binds heme delivered by CcmC and transfers the heme to apo-cytochromes in a process facilitated by CcmF and CcmH. The protein is Cytochrome c-type biogenesis protein CcmE of Yersinia pseudotuberculosis serotype O:3 (strain YPIII).